Here is a 540-residue protein sequence, read N- to C-terminus: (13S,14R)-13-O-acetyl-1-hydroxy-N-methylcanadine 8-hydroxylase CYP82X1 (540 aa).

Residues Phe15–Val35 form a helical membrane-spanning segment. Residue Cys483 participates in heme binding.

It belongs to the cytochrome P450 family. Heme serves as cofactor. In terms of tissue distribution, highly expressed in capsules. Expressed is stems.

Its subcellular location is the membrane. It catalyses the reaction (13S,14R)-13-O-acetyl-1-hydroxy-N-methylcanadine + reduced [NADPH--hemoprotein reductase] + O2 = (13S,14R)-13-O-acetyl-1,8-dihydroxy-N-methylcanadine + oxidized [NADPH--hemoprotein reductase] + H2O + H(+). It participates in alkaloid biosynthesis. Cytochrome P450 involved in the biosynthesis of the benzylisoquinoline alkaloid noscapine. Converts (13S,14R)-13-O-acetyl-1-hydroxy-N-methylcanadine to (13S,14R)-13-O-acetyl-1,8-dihydroxy-N-methylcanadine. The sequence is that of (13S,14R)-13-O-acetyl-1-hydroxy-N-methylcanadine 8-hydroxylase CYP82X1 from Papaver somniferum (Opium poppy).